Reading from the N-terminus, the 140-residue chain is Large ribosomal subunit protein uL16 (140 aa).

Belongs to the universal ribosomal protein uL16 family. As to quaternary structure, part of the 50S ribosomal subunit.

Binds 23S rRNA and is also seen to make contacts with the A and possibly P site tRNAs. The protein is Large ribosomal subunit protein uL16 of Syntrophus aciditrophicus (strain SB).